The primary structure comprises 129 residues: Small ribosomal subunit protein uS11 (129 aa).

The protein belongs to the universal ribosomal protein uS11 family. As to quaternary structure, part of the 30S ribosomal subunit. Interacts with proteins S7 and S18. Binds to IF-3.

Located on the platform of the 30S subunit, it bridges several disparate RNA helices of the 16S rRNA. Forms part of the Shine-Dalgarno cleft in the 70S ribosome. This Psychromonas ingrahamii (strain DSM 17664 / CCUG 51855 / 37) protein is Small ribosomal subunit protein uS11.